We begin with the raw amino-acid sequence, 374 residues long: LIM domain-binding protein 1-A (374 aa).

Disordered regions lie at residues 1–24, 249–297, and 322–374; these read MLDR…IGRH, PPAE…ALSS, and TRLE…QSSQ. A compositionally biased stretch (low complexity) spans 267-297; it reads SGGSTMSSGGGNNNNSNSKKKSPASSFALSS. The LIM interaction domain (LID) domain maps to 299-338; that stretch reads DVMVVGEPTLMGGEFGDEDERLITRLENTQFDAANGIDDE. Residues 341 to 374 show a composition bias toward polar residues; that stretch reads FNSSPTMGTNSPWNSKAPSSQQGKNDNPSSQSSQ.

The protein belongs to the LDB family. As to expression, expressed ubiquitously in the embryo and adult.

Its subcellular location is the nucleus. Functionally, binds to the LIM domain of a wide variety of LIM domain-containing transcription factors. The sequence is that of LIM domain-binding protein 1-A (ldb1a) from Danio rerio (Zebrafish).